Reading from the N-terminus, the 203-residue chain is NAD(P)H dehydrogenase (quinone) (203 aa).

Residues 3–194 (VLIVYYSLYG…DAARFQGRHI (192 aa)) form the Flavodoxin-like domain. Residues 9 to 14 (SLYGHV) and 82 to 84 (TRF) each bind FMN. Tyrosine 11 lines the NAD(+) pocket. Tryptophan 102 serves as a coordination point for substrate. Residues 117-123 (STATQHG) and histidine 138 each bind FMN.

This sequence belongs to the WrbA family. Requires FMN as cofactor.

The enzyme catalyses a quinone + NADH + H(+) = a quinol + NAD(+). It carries out the reaction a quinone + NADPH + H(+) = a quinol + NADP(+). This chain is NAD(P)H dehydrogenase (quinone), found in Solidesulfovibrio magneticus (strain ATCC 700980 / DSM 13731 / RS-1) (Desulfovibrio magneticus).